The following is a 797-amino-acid chain: Outer membrane protein assembly factor BamA (797 aa).

The signal sequence occupies residues 1–21 (MKLKQIASALMMLGISPLALA). 5 POTRA domains span residues 23–90 (FTIQ…VIER), 91–171 (PTIG…IDEG), 174–262 (AKIT…VHEG), 265–344 (FRWG…IEPG), and 347–421 (IYVN…LTER).

It belongs to the BamA family. As to quaternary structure, part of the Bam complex.

The protein resides in the cell outer membrane. Part of the outer membrane protein assembly complex, which is involved in assembly and insertion of beta-barrel proteins into the outer membrane. This Neisseria meningitidis serogroup B (strain ATCC BAA-335 / MC58) protein is Outer membrane protein assembly factor BamA.